The chain runs to 286 residues: Secretory carrier-associated membrane protein 2 (286 aa).

Composition is skewed to basic and acidic residues over residues 1-10 (MAGRYDRNPF) and 54-63 (STKDMKKKEK). Positions 1-63 (MAGRYDRNPF…STKDMKKKEK (63 aa)) are disordered. The Cytoplasmic segment spans residues 1–126 (MAGRYDRNPF…LQRMQYLAFS (126 aa)). Residues 52 to 89 (LDSTKDMKKKEKELQAKEAELNKRESELRRREEAASRA) adopt a coiled-coil conformation. 4 helical membrane-spanning segments follow: residues 127–147 (SLLG…AAWI), 152–172 (VMIW…AYVL), 189–209 (FGWF…SAVA), and 237–257 (IFYF…VVVI). The Cytoplasmic portion of the chain corresponds to 258 to 286 (QQVYMYFRGSGKAAEMKREAARGAMRSAF).

This sequence belongs to the SCAMP family.

Its subcellular location is the cell membrane. The protein localises to the cytoplasmic vesicle. It localises to the secretory vesicle membrane. Functionally, probably involved in membrane trafficking. The polypeptide is Secretory carrier-associated membrane protein 2 (SCAMP2) (Oryza sativa subsp. japonica (Rice)).